The chain runs to 171 residues: Inosine/xanthosine triphosphatase (171 aa).

Residue 8–13 participates in substrate binding; it reads TTNPAK. Mg(2+)-binding residues include Asp38 and Gln68.

The protein belongs to the YjjX NTPase family. As to quaternary structure, homodimer. Requires Mg(2+) as cofactor. The cofactor is Mn(2+).

It carries out the reaction XTP + H2O = XDP + phosphate + H(+). The catalysed reaction is ITP + H2O = IDP + phosphate + H(+). Its function is as follows. Phosphatase that hydrolyzes non-canonical purine nucleotides such as XTP and ITP to their respective diphosphate derivatives. Probably excludes non-canonical purines from DNA/RNA precursor pool, thus preventing their incorporation into DNA/RNA and avoiding chromosomal lesions. The sequence is that of Inosine/xanthosine triphosphatase from Cronobacter sakazakii (strain ATCC BAA-894) (Enterobacter sakazakii).